Consider the following 731-residue polypeptide: Small conductance calcium-activated potassium channel protein 3 (731 aa).

The span at 1–11 (MDTSGHFHDSG) shows a compositional bias: basic and acidic residues. Disordered regions lie at residues 1–170 (MDTS…SNPF) and 239–258 (ATHN…FPKA). Positions 30–40 (QQQQQQQQQQQ) are enriched in low complexity. Pro residues predominate over residues 41–51 (QPPPPAPPAAP). Over residues 52–95 (QQPLGPSLQPQPPQLQQQQQQQQQQQQQQPPHPLSQLAQLQSQP) the composition is skewed to low complexity. Polar residues predominate over residues 112–132 (PSSNSTAILHPSSRQGSQLNL). Over residues 138–147 (GHSPSSTATS) the composition is skewed to low complexity. Ser167 bears the Phosphoserine mark. The span at 239–256 (ATHNHQHAGTTASSTTFP) shows a compositional bias: polar residues. Residues 288-308 (LIFGMFGIVVMVIETELSWGL) form a helical membrane-spanning segment. Residues 315–335 (FSLALKCLISLSTIILLGLII) form a helical membrane-spanning segment. A helical transmembrane segment spans residues 366-386 (ISLEMLVCAIHPIPGEYKFFW). A helical membrane pass occupies residues 405-425 (IILSIPMFLRLYLIARVMLLH). A helical membrane pass occupies residues 454 to 474 (LMTICPGTVLLVFSISLWIIA). Residues 494 to 514 (FLGAMWLISITFLSIGYGDMV) constitute an intramembrane region (pore-forming). The helical transmembrane segment at 523–543 (VCLLTGIMGAGCTALVVAVVA) threads the bilayer. The interval 561-637 (DTQLTKRIKN…LVDLSKMQNV (77 aa)) is calmodulin-binding. The stretch at 642 to 669 (ITELNDRSEDLEKQIGSLESKLEHLTAS) forms a coiled coil. Residues 709-731 (ISDSPIGVSSTSFPTPYTSSSSC) form a disordered region. Positions 717 to 731 (SSTSFPTPYTSSSSC) are enriched in low complexity.

This sequence belongs to the potassium channel KCNN family. KCa2.3/KCNN3 subfamily. As to quaternary structure, homodimer. Heteromultimer with KCNN2 or KCNN1; this modulates plasma membrane expression and consequently the small conductance calcium-activated potassium channel activity. The complex is composed of 4 channel subunits each of which binds to a calmodulin subunit which regulates the channel activity through calcium-binding. Interacts with CALM1. Widely distributed in human tissues and is present at 20-60% of KCNN3 in the brain.

It localises to the cell membrane. The protein localises to the cytoplasm. Its subcellular location is the myofibril. The protein resides in the sarcomere. It is found in the z line. It carries out the reaction K(+)(in) = K(+)(out). Its activity is regulated as follows. Inhibited by bee venom neurotoxin apamin. Its function is as follows. Small conductance calcium-activated potassium channel that mediates the voltage-independent transmembrane transfer of potassium across the cell membrane through a constitutive interaction with calmodulin which binds the intracellular calcium allowing its opening. The current is characterized by a voltage-independent activation, an intracellular calcium concentration increase-dependent activation and a single-channel conductance of 10 picosiemens. Also presents an inwardly rectifying current, thus reducing its already small outward conductance of potassium ions, which is particularly the case when the membrane potential displays positive values, above + 20 mV. Activation is followed by membrane hyperpolarization. Thought to regulate neuronal excitability by contributing to the slow component of synaptic afterhyperpolarization. Does not function as a small conductance calcium-activated potassium channel. Selectively suppresses endogenous KCNN3 currents, in a dominant-negative fashion by decreasing the abundance of functional channels in the plasma membrane, possibly by selectively coassembling with and sequestering native KCNN3 protein in intracellular compartments. This dominant inhibitory effect extends to other members of the SK subfamily. This chain is Small conductance calcium-activated potassium channel protein 3, found in Homo sapiens (Human).